Reading from the N-terminus, the 236-residue chain is Probable transmembrane ascorbate ferrireductase 4 (236 aa).

A Cytochrome b561 domain is found at 14 to 210; that stretch reads FARLSGLVVA…LGCIVITAAI (197 aa). The next 3 membrane-spanning stretches (helical) occupy residues 17–37, 42–62, and 76–96; these read LSGL…PNLG, TLHP…AILI, and VHLW…WTKF. Residues histidine 44, histidine 77, and histidine 110 each coordinate heme b. 3 helical membrane passes run 112–132, 144–164, and 191–211; these read WMGL…FMSF, TFLP…IATA, and VNGL…AAIL. Position 149 (histidine 149) interacts with heme b.

Homodimer. It depends on heme b as a cofactor.

It is found in the membrane. The catalysed reaction is Fe(3+)(out) + L-ascorbate(in) = monodehydro-L-ascorbate radical(in) + Fe(2+)(out) + H(+). In terms of biological role, two-heme-containing cytochrome. May catalyze ascorbate-dependent trans-membrane ferric-chelate reduction. The polypeptide is Probable transmembrane ascorbate ferrireductase 4 (CYB561D) (Arabidopsis thaliana (Mouse-ear cress)).